A 304-amino-acid polypeptide reads, in one-letter code: MTNKVVILGSTNVDQFLTVERYAQPGETLHVEEAQKAFGGGKGANQAIATARMQADTTFITKIGTDGVADFILEDFKVAHIDTSYIIKTAEAKTGQAFITVNAEGQNTIYVYGGANMTMTPEDVINAKDAIINADFVVAQLEVPIPAIISAFEIAKAHGVTTVLNPAPAKALPNELLSLIDIIVPNETEAELLSGIKVTNEQSMKDNANYFLSIGIKTVLITLGKQGTYFATKNQSQHIEAYKVNAIDTTAAGDTFIGAFVSRLNKSQDNLADAIDFGNKASSLTVQKHGAQASIPLLEEVNQV.

Residues 12-14, 41-45, and glutamate 142 each bind substrate; these read NVD and GKGAN. ATP is bound by residues asparagine 186 and 222-227; that span reads TLGKQG. K(+) is bound by residues aspartate 248 and threonine 250. Residues 253–254 and asparagine 279 each bind ATP; that span reads GD. Aspartate 254 provides a ligand contact to substrate. Aspartate 254 functions as the Proton acceptor in the catalytic mechanism. K(+) is bound by residues threonine 285, lysine 288, glycine 290, and serine 294.

Belongs to the carbohydrate kinase PfkB family. Ribokinase subfamily. As to quaternary structure, homodimer. Requires Mg(2+) as cofactor.

The protein localises to the cytoplasm. It catalyses the reaction D-ribose + ATP = D-ribose 5-phosphate + ADP + H(+). Its pathway is carbohydrate metabolism; D-ribose degradation; D-ribose 5-phosphate from beta-D-ribopyranose: step 2/2. With respect to regulation, activated by a monovalent cation that binds near, but not in, the active site. The most likely occupant of the site in vivo is potassium. Ion binding induces a conformational change that may alter substrate affinity. Catalyzes the phosphorylation of ribose at O-5 in a reaction requiring ATP and magnesium. The resulting D-ribose-5-phosphate can then be used either for sythesis of nucleotides, histidine, and tryptophan, or as a component of the pentose phosphate pathway. This Staphylococcus aureus (strain COL) protein is Ribokinase.